Here is a 166-residue protein sequence, read N- to C-terminus: Large ribosomal subunit protein mL41 (166 aa).

Residues M1–E26 constitute a mitochondrion transit peptide. Residues K136 to F166 are disordered.

This sequence belongs to the mitochondrion-specific ribosomal protein mL41 family. As to quaternary structure, component of the mitochondrial ribosome large subunit (39S) which comprises a 16S rRNA and about 50 distinct proteins.

It localises to the mitochondrion. This chain is Large ribosomal subunit protein mL41 (mRpL41), found in Drosophila melanogaster (Fruit fly).